A 153-amino-acid polypeptide reads, in one-letter code: SsrA-binding protein (153 aa).

It belongs to the SmpB family.

The protein localises to the cytoplasm. In terms of biological role, required for rescue of stalled ribosomes mediated by trans-translation. Binds to transfer-messenger RNA (tmRNA), required for stable association of tmRNA with ribosomes. tmRNA and SmpB together mimic tRNA shape, replacing the anticodon stem-loop with SmpB. tmRNA is encoded by the ssrA gene; the 2 termini fold to resemble tRNA(Ala) and it encodes a 'tag peptide', a short internal open reading frame. During trans-translation Ala-aminoacylated tmRNA acts like a tRNA, entering the A-site of stalled ribosomes, displacing the stalled mRNA. The ribosome then switches to translate the ORF on the tmRNA; the nascent peptide is terminated with the 'tag peptide' encoded by the tmRNA and targeted for degradation. The ribosome is freed to recommence translation, which seems to be the essential function of trans-translation. This Orientia tsutsugamushi (strain Ikeda) (Rickettsia tsutsugamushi) protein is SsrA-binding protein.